The following is a 130-amino-acid chain: Small ribosomal subunit protein uS11 (130 aa).

Belongs to the universal ribosomal protein uS11 family. As to quaternary structure, part of the 30S ribosomal subunit. Interacts with proteins S7 and S18. Binds to IF-3.

In terms of biological role, located on the platform of the 30S subunit, it bridges several disparate RNA helices of the 16S rRNA. Forms part of the Shine-Dalgarno cleft in the 70S ribosome. The sequence is that of Small ribosomal subunit protein uS11 from Aliarcobacter butzleri (strain RM4018) (Arcobacter butzleri).